Reading from the N-terminus, the 258-residue chain is L-rhamnose-1-dehydrogenase (258 aa).

NADP(+)-binding residues include Ile-19, Asp-68, and Asn-95. Active-site proton donor residues include Ser-147 and Tyr-161. Residues Tyr-161, Lys-165, Ile-194, and Thr-196 each contribute to the NADP(+) site. Lys-165 functions as the Lowers pKa of active site Tyr in the catalytic mechanism.

This sequence belongs to the short-chain dehydrogenases/reductases (SDR) family.

The catalysed reaction is L-rhamnofuranose + NAD(+) = L-rhamnono-1,4-lactone + NADH + H(+). Functionally, NAD-dependent dehydrogenase that has high activity with L-rhamnose and L-lyxose, and shows only low activity with L-mannose. Has no activity with NADP. Catalyzes the first step in an alternative pathway for rhamnose utilization that does not involve phosphorylated intermediates. This Scheffersomyces stipitis (strain ATCC 58785 / CBS 6054 / NBRC 10063 / NRRL Y-11545) (Yeast) protein is L-rhamnose-1-dehydrogenase (DHG2).